Consider the following 258-residue polypeptide: CDP-diacylglycerol pyrophosphatase (258 aa).

The helical transmembrane segment at 10-30 threads the bilayer; it reads YLLTLLILIILAAGLIYKLRF.

It belongs to the Cdh family.

The protein resides in the cell inner membrane. The catalysed reaction is a CDP-1,2-diacyl-sn-glycerol + H2O = a 1,2-diacyl-sn-glycero-3-phosphate + CMP + 2 H(+). The protein operates within phospholipid metabolism; CDP-diacylglycerol degradation; phosphatidate from CDP-diacylglycerol: step 1/1. This chain is CDP-diacylglycerol pyrophosphatase (cdh), found in Yersinia pestis.